The chain runs to 126 residues: UPF0102 protein BH12350 (126 aa).

It belongs to the UPF0102 family.

This chain is UPF0102 protein BH12350, found in Bartonella henselae (strain ATCC 49882 / DSM 28221 / CCUG 30454 / Houston 1) (Rochalimaea henselae).